Reading from the N-terminus, the 622-residue chain is uncharacterized protein (622 aa).

The N-terminal stretch at 1–20 is a signal peptide; sequence MKIKAVAIFLSLLMIISLFS.

This is an uncharacterized protein from Methanocaldococcus jannaschii (strain ATCC 43067 / DSM 2661 / JAL-1 / JCM 10045 / NBRC 100440) (Methanococcus jannaschii).